Reading from the N-terminus, the 800-residue chain is Kolavenyl diphosphate synthase TPS5, chloroplastic (800 aa).

A chloroplast-targeting transit peptide spans 1–75 (MSLAYSQATS…VILTAEKSVD (75 aa)). Lys-244 serves as a coordination point for substrate. Residues Asp-375 and Asp-377 each contribute to the Mg(2+) site. The DXDD motif motif lies at 375-378 (DVDD). Position 461 (Lys-461) interacts with substrate.

This sequence belongs to the terpene synthase family. Requires Mg(2+) as cofactor. In terms of tissue distribution, mostly expressed in trichomes of leaves and fruits.

It is found in the plastid. The protein resides in the chloroplast. It carries out the reaction (2E,6E,10E)-geranylgeranyl diphosphate = (+)-kolavenyl diphosphate. The protein operates within secondary metabolite biosynthesis; terpenoid biosynthesis. In terms of biological role, involved in the biosynthesis of labdane-type diterpenoid including cleroda-dienols, and peregrinol lactones and furan derivatives, dopaminergic diterpenoids that can bind to dopamine receptors in the human pituitary gland, have probably ability to lower prolactin levels, and are used to treat menstrual cycle disorders (e.g. premenstrual syndrome and mastodynia). Terpene synthase that produces kolavenyl diphosphate from geranylgeranyl diphosphate (GGPP). The chain is Kolavenyl diphosphate synthase TPS5, chloroplastic from Vitex agnus-castus (Chaste tree).